Consider the following 310-residue polypeptide: Glutaminase 1 (310 aa).

Ser-66, Asn-117, Glu-161, Asn-168, Tyr-192, Tyr-244, and Val-262 together coordinate substrate. Position 294 is an N6-acetyllysine (Lys-294).

Belongs to the glutaminase family. In terms of assembly, homotetramer.

It catalyses the reaction L-glutamine + H2O = L-glutamate + NH4(+). The protein is Glutaminase 1 of Escherichia coli (strain K12).